A 1883-amino-acid chain; its full sequence is Chromodomain-helicase-DNA-binding protein 1 (1883 aa).

Polar residues predominate over residues 1 to 14 (MSQALNESANSIGS). The interval 1–293 (MSQALNESAN…SEDEATDSED (293 aa)) is disordered. Low complexity predominate over residues 39-56 (SGSDSDSDSSSGNSSDGR). Polar residues predominate over residues 114 to 128 (QRNQSINNANTSSSL). The span at 159 to 172 (DSSANVSPTSSSSS) shows a compositional bias: low complexity. Residues 213–226 (SDESDESEDSDDEV) show a composition bias toward acidic residues. Positions 236–247 (ATTSRSKLAQQQ) are enriched in polar residues. Acidic residues predominate over residues 284 to 293 (SEDEATDSED). Chromo domains lie at 318-414 (ETIE…YWRR) and 439-501 (NNVD…TPSR). Positions 540–710 (LHSWCKENSV…WALLHFIMPD (171 aa)) constitute a Helicase ATP-binding domain. 553–560 (DEMGLGKT) lines the ATP pocket. The short motif at 661 to 664 (DEAH) is the DEAH box element. The 152-residue stretch at 840-991 (LLDKLLCRLK…HLVIQRMDTT (152 aa)) folds into the Helicase C-terminal domain. 5 disordered regions span residues 1074–1185 (FEEE…MKEK), 1246–1265 (HKEEESKTAATDETPGAKQR), 1390–1491 (TKGG…MHFT), 1599–1829 (KAGG…PYSS), and 1848–1883 (PPPSSVYRSDPRGYPVMPRDYPADYRRSDYERRTQT). Residues 1091–1103 (GEEDDSKDWDDII) are compositionally biased toward acidic residues. Residues 1106 to 1121 (GFRKAIDDQERAKEME) are compositionally biased toward basic and acidic residues. A compositionally biased stretch (basic residues) spans 1393 to 1402 (GQRRQRRPRA). Positions 1437–1451 (AESSNSQVDPSTASP) are enriched in polar residues. The span at 1466–1476 (KAKKSKARSKK) shows a compositional bias: basic residues. The CHD1 helical C-terminal domain (CHCT) stretch occupies residues 1505-1606 (LDPSIFNECK…KQKAGGDGEA (102 aa)). The segment covering 1600 to 1612 (AGGDGEAKGKDKG) has biased composition (basic and acidic residues). Positions 1613–1622 (SSGSPAKSKP) are enriched in low complexity. Residues 1627 to 1638 (TEEKEKERDRSG) are compositionally biased toward basic and acidic residues. Residues 1724–1738 (YYGGSGPPMGSGSYE) are compositionally biased toward gly residues. The span at 1742-1755 (NSRRQGPTSPSTPR) shows a compositional bias: polar residues. Basic and acidic residues-rich tracts occupy residues 1773–1794 (EMERWQSRDRYSQDYKRDRYDG), 1805–1817 (YHRERDRRPEKRR), and 1868–1883 (YPADYRRSDYERRTQT).

It belongs to the SNF2/RAD54 helicase family. Monomer. Component of the SAGA complex. Interacts with SSRP1.

Its subcellular location is the nucleus. The protein resides in the chromosome. The catalysed reaction is ATP + H2O = ADP + phosphate + H(+). Its function is as follows. ATP-dependent chromatin-remodeling factor which functions as substrate recognition component of the transcription regulatory histone acetylation (HAT) complex SAGA. Regulates polymerase II transcription. Also required for efficient transcription by RNA polymerase I, and more specifically the polymerase I transcription termination step. Regulates negatively DNA replication. Not only involved in transcription-related chromatin remodeling, but also required to maintain a specific chromatin configuration across the genome. Involved in assembly of active chromatin. Required for maintaining open chromatin and pluripotency in embryonic stem cells and is important for wing development and fertility. Is essential for the incorporation of histone H3.3 and assembly of paternal chromatin. Required for replication-independent nucleosome assembly in the decondensing male pronucleus. The protein is Chromodomain-helicase-DNA-binding protein 1 (Chd1) of Drosophila melanogaster (Fruit fly).